A 173-amino-acid polypeptide reads, in one-letter code: Lactoylglutathione lyase (173 aa).

One can recognise a VOC domain in the interval 24–170 (VFNHTMLRVK…DGYWVEVIQP (147 aa)). His27 contributes to the Ni(2+) binding site. Arg31 contacts substrate. Glu93 is a Ni(2+) binding site. 3 residues coordinate substrate: Asn97, Arg116, and His120. Residues His120 and Glu166 each contribute to the Ni(2+) site. Residue Glu166 is the Proton donor/acceptor of the active site.

The protein belongs to the glyoxalase I family. In terms of assembly, monomer. The cofactor is Ni(2+). It depends on Zn(2+) as a cofactor.

It catalyses the reaction (R)-S-lactoylglutathione = methylglyoxal + glutathione. Its pathway is secondary metabolite metabolism; methylglyoxal degradation; (R)-lactate from methylglyoxal: step 1/2. In terms of biological role, catalyzes the conversion of hemimercaptal, formed from methylglyoxal and glutathione, to S-lactoylglutathione. The protein is Lactoylglutathione lyase (gloA) of Pseudomonas putida (Arthrobacter siderocapsulatus).